Reading from the N-terminus, the 298-residue chain is Lipoyl synthase (298 aa).

The [4Fe-4S] cluster site is built by Cys40, Cys45, Cys51, Cys67, Cys71, Cys74, and Ser280. The region spanning 53-269 (AVRRTATFMI…KEIALSKGFS (217 aa)) is the Radical SAM core domain.

This sequence belongs to the radical SAM superfamily. Lipoyl synthase family. The cofactor is [4Fe-4S] cluster.

Its subcellular location is the cytoplasm. It catalyses the reaction [[Fe-S] cluster scaffold protein carrying a second [4Fe-4S](2+) cluster] + N(6)-octanoyl-L-lysyl-[protein] + 2 oxidized [2Fe-2S]-[ferredoxin] + 2 S-adenosyl-L-methionine + 4 H(+) = [[Fe-S] cluster scaffold protein] + N(6)-[(R)-dihydrolipoyl]-L-lysyl-[protein] + 4 Fe(3+) + 2 hydrogen sulfide + 2 5'-deoxyadenosine + 2 L-methionine + 2 reduced [2Fe-2S]-[ferredoxin]. It participates in protein modification; protein lipoylation via endogenous pathway; protein N(6)-(lipoyl)lysine from octanoyl-[acyl-carrier-protein]. In terms of biological role, catalyzes the radical-mediated insertion of two sulfur atoms into the C-6 and C-8 positions of the octanoyl moiety bound to the lipoyl domains of lipoate-dependent enzymes, thereby converting the octanoylated domains into lipoylated derivatives. This is Lipoyl synthase from Geobacillus kaustophilus (strain HTA426).